The chain runs to 644 residues: Exoribonuclease 2 (644 aa).

Residues 189 to 516 (REDLTSLDFV…NHRLLKAVIK (328 aa)) form the RNB domain. The S1 motif domain occupies 561–643 (GTRFAAEIVD…ETRSIIARPV (83 aa)).

This sequence belongs to the RNR ribonuclease family. RNase II subfamily.

The protein localises to the cytoplasm. It catalyses the reaction Exonucleolytic cleavage in the 3'- to 5'-direction to yield nucleoside 5'-phosphates.. Its function is as follows. Involved in mRNA degradation. Hydrolyzes single-stranded polyribonucleotides processively in the 3' to 5' direction. The chain is Exoribonuclease 2 from Shigella flexneri.